Consider the following 179-residue polypeptide: Large ribosomal subunit protein uL6 (179 aa).

The protein belongs to the universal ribosomal protein uL6 family. Part of the 50S ribosomal subunit.

Its function is as follows. This protein binds to the 23S rRNA, and is important in its secondary structure. It is located near the subunit interface in the base of the L7/L12 stalk, and near the tRNA binding site of the peptidyltransferase center. This Mycoplasmopsis pulmonis (strain UAB CTIP) (Mycoplasma pulmonis) protein is Large ribosomal subunit protein uL6.